The following is a 692-amino-acid chain: Polyribonucleotide nucleotidyltransferase (692 aa).

Asp-484 and Asp-490 together coordinate Mg(2+). Residues 551-610 form the KH domain; sequence PRIITIQINPDRIRDVIGPGGKVIRALTEETGATIDIQDNGTVTIASVDGEAGAAAKRRI. In terms of domain architecture, S1 motif spans 620–688; it reads DTIYDGKVAK…RQGKIKLSMK (69 aa).

The protein belongs to the polyribonucleotide nucleotidyltransferase family. In terms of assembly, component of the RNA degradosome, which is a multiprotein complex involved in RNA processing and mRNA degradation. Mg(2+) is required as a cofactor.

It is found in the cytoplasm. It catalyses the reaction RNA(n+1) + phosphate = RNA(n) + a ribonucleoside 5'-diphosphate. Functionally, involved in mRNA degradation. Catalyzes the phosphorolysis of single-stranded polyribonucleotides processively in the 3'- to 5'-direction. This is Polyribonucleotide nucleotidyltransferase from Acidithiobacillus ferrooxidans (strain ATCC 53993 / BNL-5-31) (Leptospirillum ferrooxidans (ATCC 53993)).